Reading from the N-terminus, the 349-residue chain is Peroxidase 23 (349 aa).

The signal sequence occupies residues 1–29; it reads MGFSSSLSCSAMGALIVGCLLLQASNSNA. Position 30 is a pyrrolidone carboxylic acid (Q30). 4 disulfide bridges follow: C40–C120, C73–C78, C126–C329, and C206–C238. The active-site Proton acceptor is the H71. Ca(2+) is bound by residues D72, V75, G77, D79, and S81. Residue N86 is glycosylated (N-linked (GlcNAc...) asparagine). Residue P168 coordinates substrate. H199 is a heme b binding site. Residue T200 participates in Ca(2+) binding. N-linked (GlcNAc...) asparagine glycosylation is found at N217 and N243. The Ca(2+) site is built by D251, T254, and D259.

Belongs to the peroxidase family. Classical plant (class III) peroxidase subfamily. Heme b is required as a cofactor. Ca(2+) serves as cofactor.

It localises to the secreted. It is found in the vacuole. The catalysed reaction is 2 a phenolic donor + H2O2 = 2 a phenolic radical donor + 2 H2O. Removal of H(2)O(2), oxidation of toxic reductants, biosynthesis and degradation of lignin, suberization, auxin catabolism, response to environmental stresses such as wounding, pathogen attack and oxidative stress. These functions might be dependent on each isozyme/isoform in each plant tissue. This is Peroxidase 23 (PER23) from Arabidopsis thaliana (Mouse-ear cress).